Here is a 402-residue protein sequence, read N- to C-terminus: Tyrosine--tRNA ligase (402 aa).

A 'HIGH' region motif is present at residues 47-56 (PTAPDLHLGH). The 'KMSKS' region signature appears at 232 to 236 (KMSKS). Lysine 235 lines the ATP pocket. Residues 341-401 (VGVLDVLKQI…GKKRFMKLNI (61 aa)) enclose the S4 RNA-binding domain.

Belongs to the class-I aminoacyl-tRNA synthetase family. TyrS type 2 subfamily. In terms of assembly, homodimer.

The protein resides in the cytoplasm. The enzyme catalyses tRNA(Tyr) + L-tyrosine + ATP = L-tyrosyl-tRNA(Tyr) + AMP + diphosphate + H(+). Functionally, catalyzes the attachment of tyrosine to tRNA(Tyr) in a two-step reaction: tyrosine is first activated by ATP to form Tyr-AMP and then transferred to the acceptor end of tRNA(Tyr). This is Tyrosine--tRNA ligase from Helicobacter pylori (strain J99 / ATCC 700824) (Campylobacter pylori J99).